A 209-amino-acid chain; its full sequence is Prolactin (209 aa).

A signal peptide spans 1-24 (MAQRFKGSNLFLTALLCLASQGHA). Disulfide bonds link Cys70-Cys184 and Cys201-Cys209.

This sequence belongs to the somatotropin/prolactin family.

The protein localises to the secreted. This chain is Prolactin (prl), found in Anguilla japonica (Japanese eel).